We begin with the raw amino-acid sequence, 456 residues long: Protein COBRA (456 aa).

The signal sequence occupies residues methionine 1 to alanine 36. Asparagine 45, asparagine 170, asparagine 178, asparagine 217, asparagine 242, asparagine 258, asparagine 328, asparagine 343, and asparagine 362 each carry an N-linked (GlcNAc...) asparagine glycan. Asparagine 431 carries the GPI-anchor amidated asparagine lipid modification. A propeptide spans glycine 432–alanine 456 (removed in mature form).

This sequence belongs to the COBRA family. As to expression, expressed in roots, stems, leaves, flowers and siliques. Up-regulated in the root zone of rapid longitudinal expansion.

It localises to the lateral cell membrane. Involved in determining the orientation of cell expansion, probably by playing an important role in cellulose deposition. May act by recruiting cellulose synthesizing complexes to discrete positions on the cell surface. This is Protein COBRA (COB) from Arabidopsis thaliana (Mouse-ear cress).